Here is a 554-residue protein sequence, read N- to C-terminus: Carboxypeptidase Y homolog A (554 aa).

Residues 1–17 form the signal peptide; it reads MRVAASTVLLGVASAAS. The propeptide occupies 18 to 137; the sequence is FQQQTQHVLS…KLADFNLRVK (120 aa). 5 disulfides stabilise this stretch: C191-C431, C325-C339, C349-C372, C356-C365, and C394-C401. N-linked (GlcNAc...) asparagine glycosylation occurs at N222. S278 is a catalytic residue. D470 is an active-site residue. An N-linked (GlcNAc...) asparagine glycan is attached at N518. H529 is a catalytic residue.

Belongs to the peptidase S10 family.

The protein resides in the vacuole. The enzyme catalyses Release of a C-terminal amino acid with broad specificity.. In terms of biological role, vacuolar carboxypeptidase involved in degradation of small peptides. Digests preferentially peptides containing an aliphatic or hydrophobic residue in P1' position, as well as methionine, leucine or phenylalanine in P1 position of ester substrate. The chain is Carboxypeptidase Y homolog A (CPYA) from Podospora anserina (strain S / ATCC MYA-4624 / DSM 980 / FGSC 10383) (Pleurage anserina).